The chain runs to 72 residues: Small ribosomal subunit protein bS18 (72 aa).

Belongs to the bacterial ribosomal protein bS18 family. Part of the 30S ribosomal subunit. Forms a tight heterodimer with protein bS6.

In terms of biological role, binds as a heterodimer with protein bS6 to the central domain of the 16S rRNA, where it helps stabilize the platform of the 30S subunit. The polypeptide is Small ribosomal subunit protein bS18 (Francisella tularensis subsp. novicida (strain U112)).